A 121-amino-acid polypeptide reads, in one-letter code: Large ribosomal subunit protein uL24 (121 aa).

Belongs to the universal ribosomal protein uL24 family. As to quaternary structure, part of the 50S ribosomal subunit.

One of two assembly initiator proteins, it binds directly to the 5'-end of the 23S rRNA, where it nucleates assembly of the 50S subunit. Functionally, located at the polypeptide exit tunnel on the outside of the subunit. The polypeptide is Large ribosomal subunit protein uL24 (Pyrococcus furiosus (strain ATCC 43587 / DSM 3638 / JCM 8422 / Vc1)).